The primary structure comprises 227 residues: Enolase-phosphatase E1 (227 aa).

Aspartate 12 and glutamate 14 together coordinate Mg(2+). Substrate is bound by residues 118–119 (SS) and lysine 159. Position 186 (aspartate 186) interacts with Mg(2+).

Belongs to the HAD-like hydrolase superfamily. MasA/MtnC family. In terms of assembly, monomer. The cofactor is Mg(2+).

The protein localises to the cytoplasm. It is found in the nucleus. The enzyme catalyses 5-methylsulfanyl-2,3-dioxopentyl phosphate + H2O = 1,2-dihydroxy-5-(methylsulfanyl)pent-1-en-3-one + phosphate. Its pathway is amino-acid biosynthesis; L-methionine biosynthesis via salvage pathway; L-methionine from S-methyl-5-thio-alpha-D-ribose 1-phosphate: step 3/6. The protein operates within amino-acid biosynthesis; L-methionine biosynthesis via salvage pathway; L-methionine from S-methyl-5-thio-alpha-D-ribose 1-phosphate: step 4/6. Functionally, bifunctional enzyme that catalyzes the enolization of 2,3-diketo-5-methylthiopentyl-1-phosphate (DK-MTP-1-P) into the intermediate 2-hydroxy-3-keto-5-methylthiopentenyl-1-phosphate (HK-MTPenyl-1-P), which is then dephosphorylated to form the acireductone 1,2-dihydroxy-3-keto-5-methylthiopentene (DHK-MTPene). This chain is Enolase-phosphatase E1, found in Vanderwaltozyma polyspora (strain ATCC 22028 / DSM 70294 / BCRC 21397 / CBS 2163 / NBRC 10782 / NRRL Y-8283 / UCD 57-17) (Kluyveromyces polysporus).